We begin with the raw amino-acid sequence, 461 residues long: FAD-dependent monooxygenase nodY2 (461 aa).

FAD-binding residues include glutamate 48 and arginine 136. The active site involves arginine 214. FAD contacts are provided by aspartate 338 and glycine 351.

Belongs to the paxM FAD-dependent monooxygenase family. Requires FAD as cofactor.

Its pathway is secondary metabolite biosynthesis. In terms of biological role, FAD-dependent monooxygenase; part of the gene cluster that mediates the biosynthesis of the indole diterpenes nodulisporic acids (NA). Nodulisporic acid A (NAA) and its chemically modified derivatives are of particular significance because of their highly potent insecticidal activity against blood-feeding arthropods and lack of observable adverse effects on mammals, in particular the tremogenicity associated with the paspaline-derived IDTs is not observed. The geranylgeranyl diphosphate (GGPP) synthase ggs1, localized outside of the cluster, is proposed to catalyze the first step in nodulisporic acid biosynthesis via conversion of farnesyl pyrophosphate and isopentyl pyrophosphate into geranylgeranyl pyrophosphate (GGPP). Condensation of indole-3-glycerol phosphate with GGPP by the prenyl transferase nodC then forms 3-geranylgeranylindole (3-GGI). Epoxidation by the FAD-dependent monooxygenase nodM leads to a single-epoxidized-GGI that is substrate of the terpene cyclase nodB for cyclization to yield emindole SB. The terminal methyl carbon, C28, of emindole SB is then oxidized by the cytochrome P450 monooxygenase nodW to produce nodulisporic acid F (NAF), the pentacyclic core of NAA. NAF is converted to nodulisporic acid E (NAE) via prenylation. This step is probably performed by one of the indole diterpene prenyltransferases nodD1 or nodD2. Several oxidation steps performed by the FAD-linked oxidoreductase nodO and one of the cytochrome P450 monooxygenase nodR, nodX or nodZ further convert NAE to nodulisporic acid D (NAD). NAD is substrate of cytochrome P450 monooxygenase nodJ to produce the precursor of nodulisporic acid C (NAC), converted to NAC by one of the indole diterpene prenyltransferases nodD1 or nodD2. The FAD-dependent monooxygenase nodY2 then oxidizes NAC to nodulisporic acid B (NAB). Finally NAB is converted to NAA by one of the cytochrome P450 monooxygenases nodR, nodX or nodZ. This is FAD-dependent monooxygenase nodY2 from Hypoxylon pulicicidum.